Here is a 261-residue protein sequence, read N- to C-terminus: Cytochrome c oxidase subunit 3 (261 aa).

The Mitochondrial matrix segment spans residues 1-15 (MTHQTHAYHTVNPSP). Residues 16–34 (WPLTGALSALLMTSGLIMW) form a helical membrane-spanning segment. Residues 35-40 (FHFNSP) are Mitochondrial intermembrane-facing. Residues 41–66 (LLLVLGLTTNFLTMYQWWRDIIREST) traverse the membrane as a helical segment. Over 67–72 (FQGHHT) the chain is Mitochondrial matrix. Residues 73 to 105 (TIVQKGLRYGMILFIVSEVFFFAGFFWAFYHSS) traverse the membrane as a helical segment. Residues 106–128 (LAPTPELGGCWPPTGINPLNPLE) lie on the Mitochondrial intermembrane side of the membrane. A helical transmembrane segment spans residues 129-152 (VPLLNTSVLLASGVSITWAHHSLM). Topologically, residues 153–155 (EGH) are mitochondrial matrix. Residues 156 to 183 (RKHMLQALFITIALGVYFTLLQASEYYE) traverse the membrane as a helical segment. Topologically, residues 184 to 190 (APFTISD) are mitochondrial intermembrane. A helical membrane pass occupies residues 191–223 (GIYGSTFFVATGFHGLHVIIGSSFLIVCFMRQL). At 224-232 (KFHFTSSHH) the chain is on the mitochondrial matrix side. The chain crosses the membrane as a helical span at residues 233–256 (FGFEAAAWYWHFVDVVWLFLYVSI). The Mitochondrial intermembrane portion of the chain corresponds to 257–261 (YWWGS).

This sequence belongs to the cytochrome c oxidase subunit 3 family. As to quaternary structure, component of the cytochrome c oxidase (complex IV, CIV), a multisubunit enzyme composed of 14 subunits. The complex is composed of a catalytic core of 3 subunits MT-CO1, MT-CO2 and MT-CO3, encoded in the mitochondrial DNA, and 11 supernumerary subunits COX4I, COX5A, COX5B, COX6A, COX6B, COX6C, COX7A, COX7B, COX7C, COX8 and NDUFA4, which are encoded in the nuclear genome. The complex exists as a monomer or a dimer and forms supercomplexes (SCs) in the inner mitochondrial membrane with NADH-ubiquinone oxidoreductase (complex I, CI) and ubiquinol-cytochrome c oxidoreductase (cytochrome b-c1 complex, complex III, CIII), resulting in different assemblies (supercomplex SCI(1)III(2)IV(1) and megacomplex MCI(2)III(2)IV(2)).

It is found in the mitochondrion inner membrane. It carries out the reaction 4 Fe(II)-[cytochrome c] + O2 + 8 H(+)(in) = 4 Fe(III)-[cytochrome c] + 2 H2O + 4 H(+)(out). Functionally, component of the cytochrome c oxidase, the last enzyme in the mitochondrial electron transport chain which drives oxidative phosphorylation. The respiratory chain contains 3 multisubunit complexes succinate dehydrogenase (complex II, CII), ubiquinol-cytochrome c oxidoreductase (cytochrome b-c1 complex, complex III, CIII) and cytochrome c oxidase (complex IV, CIV), that cooperate to transfer electrons derived from NADH and succinate to molecular oxygen, creating an electrochemical gradient over the inner membrane that drives transmembrane transport and the ATP synthase. Cytochrome c oxidase is the component of the respiratory chain that catalyzes the reduction of oxygen to water. Electrons originating from reduced cytochrome c in the intermembrane space (IMS) are transferred via the dinuclear copper A center (CU(A)) of subunit 2 and heme A of subunit 1 to the active site in subunit 1, a binuclear center (BNC) formed by heme A3 and copper B (CU(B)). The BNC reduces molecular oxygen to 2 water molecules using 4 electrons from cytochrome c in the IMS and 4 protons from the mitochondrial matrix. The protein is Cytochrome c oxidase subunit 3 (MT-CO3) of Dasypus novemcinctus (Nine-banded armadillo).